The following is a 126-amino-acid chain: Putative 15 kDa capsid protein (126 aa).

Its subcellular location is the virion. The chain is Putative 15 kDa capsid protein (P15) from Bombyx mori nuclear polyhedrosis virus (BmNPV).